Here is a 311-residue protein sequence, read N- to C-terminus: Ribosomal protein L11 methyltransferase (311 aa).

S-adenosyl-L-methionine-binding residues include Thr-162, Gly-183, Asp-205, and Asn-248.

This sequence belongs to the methyltransferase superfamily. PrmA family.

The protein localises to the cytoplasm. The catalysed reaction is L-lysyl-[protein] + 3 S-adenosyl-L-methionine = N(6),N(6),N(6)-trimethyl-L-lysyl-[protein] + 3 S-adenosyl-L-homocysteine + 3 H(+). In terms of biological role, methylates ribosomal protein L11. This chain is Ribosomal protein L11 methyltransferase, found in Bacillus velezensis (strain DSM 23117 / BGSC 10A6 / LMG 26770 / FZB42) (Bacillus amyloliquefaciens subsp. plantarum).